A 146-amino-acid polypeptide reads, in one-letter code: Ribosomal RNA large subunit methyltransferase H (146 aa).

S-adenosyl-L-methionine contacts are provided by residues leucine 62, glycine 94, and 113–118 (LGELTL).

Belongs to the RNA methyltransferase RlmH family. As to quaternary structure, homodimer.

The protein localises to the cytoplasm. The enzyme catalyses pseudouridine(1915) in 23S rRNA + S-adenosyl-L-methionine = N(3)-methylpseudouridine(1915) in 23S rRNA + S-adenosyl-L-homocysteine + H(+). Specifically methylates the pseudouridine at position 1915 (m3Psi1915) in 23S rRNA. This Deinococcus radiodurans (strain ATCC 13939 / DSM 20539 / JCM 16871 / CCUG 27074 / LMG 4051 / NBRC 15346 / NCIMB 9279 / VKM B-1422 / R1) protein is Ribosomal RNA large subunit methyltransferase H.